The sequence spans 152 residues: Endoribonuclease YbeY (152 aa).

Residues histidine 113, histidine 117, and histidine 123 each coordinate Zn(2+).

This sequence belongs to the endoribonuclease YbeY family. Zn(2+) serves as cofactor.

It is found in the cytoplasm. Single strand-specific metallo-endoribonuclease involved in late-stage 70S ribosome quality control and in maturation of the 3' terminus of the 16S rRNA. The chain is Endoribonuclease YbeY from Acidovorax sp. (strain JS42).